A 336-amino-acid chain; its full sequence is Anthranilate phosphoribosyltransferase (336 aa).

5-phospho-alpha-D-ribose 1-diphosphate contacts are provided by residues Gly80, 83–84 (GD), Thr88, 90–93 (NIST), 108–116 (KHGNRSITS), and Ser120. An anthranilate-binding site is contributed by Gly80. Mg(2+) is bound at residue Ser92. Asn111 serves as a coordination point for anthranilate. Arg166 provides a ligand contact to anthranilate. Positions 224 and 225 each coordinate Mg(2+).

The protein belongs to the anthranilate phosphoribosyltransferase family. In terms of assembly, homodimer. It depends on Mg(2+) as a cofactor.

It catalyses the reaction N-(5-phospho-beta-D-ribosyl)anthranilate + diphosphate = 5-phospho-alpha-D-ribose 1-diphosphate + anthranilate. Its pathway is amino-acid biosynthesis; L-tryptophan biosynthesis; L-tryptophan from chorismate: step 2/5. Functionally, catalyzes the transfer of the phosphoribosyl group of 5-phosphorylribose-1-pyrophosphate (PRPP) to anthranilate to yield N-(5'-phosphoribosyl)-anthranilate (PRA). This Caldicellulosiruptor saccharolyticus (strain ATCC 43494 / DSM 8903 / Tp8T 6331) protein is Anthranilate phosphoribosyltransferase.